We begin with the raw amino-acid sequence, 304 residues long: Glutamyl-Q tRNA(Asp) synthetase (304 aa).

L-glutamate is bound by residues 14 to 18 and Glu50; that span reads RFAPS. The short motif at 17–27 is the 'HIGH' region element; sequence PSPSGPLHFGS. Residues Cys106, Cys108, Tyr120, and Cys124 each contribute to the Zn(2+) site. Residues Tyr178 and Arg196 each contribute to the L-glutamate site. Positions 234 to 238 match the 'KMSKS' region motif; the sequence is KLSKQ. Residue Lys237 coordinates ATP.

It belongs to the class-I aminoacyl-tRNA synthetase family. GluQ subfamily. Zn(2+) serves as cofactor.

Its function is as follows. Catalyzes the tRNA-independent activation of glutamate in presence of ATP and the subsequent transfer of glutamate onto a tRNA(Asp). Glutamate is transferred on the 2-amino-5-(4,5-dihydroxy-2-cyclopenten-1-yl) moiety of the queuosine in the wobble position of the QUC anticodon. The sequence is that of Glutamyl-Q tRNA(Asp) synthetase from Vibrio cholerae serotype O1 (strain ATCC 39315 / El Tor Inaba N16961).